The sequence spans 248 residues: Type III pantothenate kinase (248 aa).

Glutamate 6–lysine 13 is an ATP binding site. Residues tyrosine 94 and glycine 101–arginine 104 each bind substrate. The Proton acceptor role is filled by aspartate 103. Residue aspartate 123 coordinates K(+). Residue threonine 126 participates in ATP binding. Threonine 179 is a substrate binding site.

Belongs to the type III pantothenate kinase family. Homodimer. It depends on NH4(+) as a cofactor. K(+) is required as a cofactor.

The protein localises to the cytoplasm. It catalyses the reaction (R)-pantothenate + ATP = (R)-4'-phosphopantothenate + ADP + H(+). It participates in cofactor biosynthesis; coenzyme A biosynthesis; CoA from (R)-pantothenate: step 1/5. Catalyzes the phosphorylation of pantothenate (Pan), the first step in CoA biosynthesis. The polypeptide is Type III pantothenate kinase (Hydrogenovibrio crunogenus (strain DSM 25203 / XCL-2) (Thiomicrospira crunogena)).